Reading from the N-terminus, the 477-residue chain is UDP-N-acetylmuramate--L-alanine ligase (477 aa).

An ATP-binding site is contributed by 112-118; sequence GTHGKTT.

The protein belongs to the MurCDEF family.

Its subcellular location is the cytoplasm. It carries out the reaction UDP-N-acetyl-alpha-D-muramate + L-alanine + ATP = UDP-N-acetyl-alpha-D-muramoyl-L-alanine + ADP + phosphate + H(+). The protein operates within cell wall biogenesis; peptidoglycan biosynthesis. In terms of biological role, cell wall formation. The polypeptide is UDP-N-acetylmuramate--L-alanine ligase (Verminephrobacter eiseniae (strain EF01-2)).